A 305-amino-acid polypeptide reads, in one-letter code: Nitrogen assimilation regulatory protein nac (305 aa).

The HTH lysR-type domain occupies 1 to 58; sequence MNLRRLKYFVKIVDIGSLTQAAEVLHIAQPALSQQVATLEGEMDQQLLIRTKRGVTPT. Residues 18–37 constitute a DNA-binding region (H-T-H motif); sequence LTQAAEVLHIAQPALSQQVA.

The protein belongs to the LysR transcriptional regulatory family.

Functionally, transcriptional activator for the hut, put and ure operons and repressor for the gdh and gltB operons in response to nitrogen limitation. Negative regulator of its own expression. This Klebsiella aerogenes (Enterobacter aerogenes) protein is Nitrogen assimilation regulatory protein nac (nac).